A 211-amino-acid polypeptide reads, in one-letter code: Thiamine-phosphate synthase (211 aa).

4-amino-2-methyl-5-(diphosphooxymethyl)pyrimidine is bound by residues 41 to 45 (QYRDK) and Asn-73. Mg(2+) is bound by residues Asp-74 and Asp-93. Position 112 (Thr-112) interacts with 4-amino-2-methyl-5-(diphosphooxymethyl)pyrimidine. 139–141 (SPT) contacts 2-[(2R,5Z)-2-carboxy-4-methylthiazol-5(2H)-ylidene]ethyl phosphate. Position 142 (Lys-142) interacts with 4-amino-2-methyl-5-(diphosphooxymethyl)pyrimidine. 2-[(2R,5Z)-2-carboxy-4-methylthiazol-5(2H)-ylidene]ethyl phosphate is bound by residues Gly-169 and 189 to 190 (VS).

The protein belongs to the thiamine-phosphate synthase family. It depends on Mg(2+) as a cofactor.

The catalysed reaction is 2-[(2R,5Z)-2-carboxy-4-methylthiazol-5(2H)-ylidene]ethyl phosphate + 4-amino-2-methyl-5-(diphosphooxymethyl)pyrimidine + 2 H(+) = thiamine phosphate + CO2 + diphosphate. It catalyses the reaction 2-(2-carboxy-4-methylthiazol-5-yl)ethyl phosphate + 4-amino-2-methyl-5-(diphosphooxymethyl)pyrimidine + 2 H(+) = thiamine phosphate + CO2 + diphosphate. It carries out the reaction 4-methyl-5-(2-phosphooxyethyl)-thiazole + 4-amino-2-methyl-5-(diphosphooxymethyl)pyrimidine + H(+) = thiamine phosphate + diphosphate. The protein operates within cofactor biosynthesis; thiamine diphosphate biosynthesis; thiamine phosphate from 4-amino-2-methyl-5-diphosphomethylpyrimidine and 4-methyl-5-(2-phosphoethyl)-thiazole: step 1/1. Functionally, condenses 4-methyl-5-(beta-hydroxyethyl)thiazole monophosphate (THZ-P) and 2-methyl-4-amino-5-hydroxymethyl pyrimidine pyrophosphate (HMP-PP) to form thiamine monophosphate (TMP). This is Thiamine-phosphate synthase from Thioalkalivibrio sulfidiphilus (strain HL-EbGR7).